Reading from the N-terminus, the 545-residue chain is MLPINNNFSLPQNSFYNTISGTYADYFSAWDKWEKQALPGEERDEAVSRLKECLINNSDELRLDRLNLSSLPDNLPAQITLLNVSYNQLTNLPELPVTLKKLYSASNKLSELPVLPPALESLQVQHNELENLPALPDSLLTMNISYNEIVSLPSLPQALKNLRATRNFLTELPAFSEGNNPVVREYFFDRNQISHIPESILNLRNECSIHISDNPLSSHALQALQRLTSSPDYHGPRIYFSMSDGQQNTLHRPLADAVTAWFPENKQSDVSQTWHAFEHEEHANTFSAFLDRLSDTVSARNTSGFREQVAAWLEKLSASAELRQQSFAVAADATESCEDRVALTWNNLRKTLLVHQASEGLFDNDTGALLSLGREMFRLEILEDIARDKVRTLHFVDEIEVYLAFQTMLAEKLQLSTAVKEMRFYGVSGVTANDLRTAEAMVRSREENEFTDWFSLWGPWHAVLKRTEADRWALAEEQKYEMLENEYPQRVADRLKASGLSGDADAEREAGAQVMRETEQQIYRQLTDEVLALRLSENGSQLHHS.

The interval 1-242 (MLPINNNFSL…YHGPRIYFSM (242 aa)) is interaction with target proteins. LRR repeat units follow at residues 57-77 (NSDE…NLPA), 78-99 (QITL…PVTL), 100-117 (KKLY…VLPP), 118-139 (ALES…PDSL), 140-157 (LTMN…SLPQ), 158-179 (ALKN…SEGN), 182-203 (VVRE…ILNL), and 205-228 (NECS…QRLT). Positions 243–250 (SDGQQNTL) are linker. The tract at residues 251–545 (HRPLADAVTA…SENGSQLHHS (295 aa)) is E3 ubiquitin-protein ligase catalytic domain. Residues 253-545 (PLADAVTAWF…SENGSQLHHS (293 aa)) form the NEL domain. Catalysis depends on Cys-337, which acts as the Glycyl thioester intermediate.

It belongs to the LRR-containing bacterial E3 ligase family. As to quaternary structure, also interacts with human and mouse U2AF1 (U2AF35). Post-translationally, ubiquitinated in the presence of host E1 ubiquitin-activating enzyme, E2 ubiquitin-conjugating enzyme and ubiquitin.

The protein localises to the secreted. Its subcellular location is the host cytoplasm. It is found in the host nucleus. It carries out the reaction S-ubiquitinyl-[E2 ubiquitin-conjugating enzyme]-L-cysteine + [acceptor protein]-L-lysine = [E2 ubiquitin-conjugating enzyme]-L-cysteine + N(6)-ubiquitinyl-[acceptor protein]-L-lysine.. With respect to regulation, exists in an autoinhibited state in the absence of substrate protein, due to interactions of the leucine-rich repeats with NEL domain. Is activated upon binding to a substrate protein. Functionally, effector E3 ubiquitin ligase that interferes with host's ubiquitination pathway and modulates the acute inflammatory responses, thus facilitating bacterial colonization within the host cell. Interacts with IKBKG (NEMO) and TNIP1 (ABIN-1), a ubiquitin-binding adapter protein, which results in TNIP1-dependent 'Lys-27'-linked polyubiquitination of IKBKG. Consequently, polyubiquitinated IKBKG undergoes proteasome-dependent degradation, which perturbs NF-kappa-B activation during bacterial infection. Mediates polyubiquitination of host U2AF1, leading to its proteasomal degradation. Catalyzes 'Lys-48'-linked polyubiquitination and subsequent degradation of a subset of host guanylate-binding proteins (GBP1, GBP2, GBP4 and GBP6), thereby suppressing host cell defense. In contrast, host GBP3 and GBP7 are not ubiquitinated by IpaH9.8. Uses UBE2D2 (UBCH5B) as an E2 ubiquitin-conjugating enzyme. This is E3 ubiquitin-protein ligase ipaH9.8 (ipaH9.8) from Shigella dysenteriae serotype 1 (strain Sd197).